Reading from the N-terminus, the 306-residue chain is UDP-N-acetylenolpyruvoylglucosamine reductase (306 aa).

The region spanning 34 to 198 (VGGPADLLIT…LEVTFKLHNS (165 aa)) is the FAD-binding PCMH-type domain. Arginine 177 is a catalytic residue. Serine 227 serves as the catalytic Proton donor. Residue glutamate 297 is part of the active site.

Belongs to the MurB family. FAD serves as cofactor.

Its subcellular location is the cytoplasm. It catalyses the reaction UDP-N-acetyl-alpha-D-muramate + NADP(+) = UDP-N-acetyl-3-O-(1-carboxyvinyl)-alpha-D-glucosamine + NADPH + H(+). Its pathway is cell wall biogenesis; peptidoglycan biosynthesis. In terms of biological role, cell wall formation. The chain is UDP-N-acetylenolpyruvoylglucosamine reductase from Clostridium botulinum (strain 657 / Type Ba4).